The following is a 1910-amino-acid chain: C2 domain-containing protein (1910 aa).

Residues 1–28 (MMKLKEMVEAAEAKVESKPPQAAEEKAP) are compositionally biased toward basic and acidic residues. Disordered regions lie at residues 1 to 54 (MMKL…EPLD), 355 to 377 (AMKLPNRGTRSPSGLESNRPEDG), and 398 to 428 (LEELPASLRPPLSKRRKGEDKKDGNKADGPQ). The segment covering 414-423 (KGEDKKDGNK) has biased composition (basic and acidic residues). Residues 557-678 (QLGEVSESDS…FFNEKHNKRN (122 aa)) enclose the C2 domain. Basic and acidic residues-rich tracts occupy residues 1192–1205 (LAQKEKQSREDAQR) and 1215–1228 (GHEGADNGAEDKQG). 6 disordered regions span residues 1192–1267 (LAQK…VKKG), 1405–1424 (ATAGEGEQQTSEGIPTRDMQ), 1431–1654 (LEEA…SMGA), 1666–1747 (QRKH…FLSS), 1822–1841 (AKEEKDLIARQPPPARDWSD), and 1879–1910 (DACSRRAESSNESRTTAGAKLRQQQLDLAGRT). Composition is skewed to low complexity over residues 1239–1257 (AAAAAVAEESVSAEAVQGA) and 1405–1414 (ATAGEGEQQT). Residues 1440-1469 (KKKKKKEKKEKKEKKEKKEKKEKKEKKKKK) are compositionally biased toward basic residues. Residues 1492–1502 (PAAAIPSVLLP) are compositionally biased toward low complexity. The segment covering 1517-1526 (KKEKKEKKKK) has biased composition (basic residues). Residues 1550-1561 (PAAAIPSILLPA) show a composition bias toward low complexity. Basic and acidic residues predominate over residues 1569–1584 (EKPKEKKTEKKKEKHT). The span at 1595–1604 (LPESETTAVV) shows a compositional bias: polar residues. 2 stretches are compositionally biased toward low complexity: residues 1620–1629 (VPSSIASSEA) and 1675–1698 (SSSSSSEVSASSASSLSPSSSSSS). A compositionally biased stretch (basic and acidic residues) spans 1701–1711 (AETRAKADALR). 2 stretches are compositionally biased toward low complexity: residues 1712–1722 (ARLQAAQARLA) and 1729–1747 (VSSSETESSETSEASFLSS). A coiled-coil region spans residues 1766–1828 (QQRLQKMVSG…TRRAKEEKDL (63 aa)). Polar residues predominate over residues 1890–1904 (ESRTTAGAKLRQQQL).

Its subcellular location is the membrane. Its function is as follows. Regulates microneme secretion. Probably involved in regulation of rhoptry and dense granule secretion. The sequence is that of C2 domain-containing protein from Toxoplasma gondii.